The sequence spans 181 residues: Probable cobalt-precorrin-6B C(15)-methyltransferase (decarboxylating) (181 aa).

S-adenosyl-L-methionine contacts are provided by residues Thr-16, 40–44, Asp-61, and Ala-89; that span reads GCGSG.

Belongs to the methyltransferase superfamily. Archaeal-type CbiT family.

It carries out the reaction Co-precorrin-6B + S-adenosyl-L-methionine = Co-precorrin-7 + S-adenosyl-L-homocysteine + CO2. Its pathway is cofactor biosynthesis; adenosylcobalamin biosynthesis; cob(II)yrinate a,c-diamide from sirohydrochlorin (anaerobic route): step 8/10. In terms of biological role, catalyzes the methylation of C-15 in cobalt-precorrin-6B followed by the decarboxylation of C-12 to form cobalt-precorrin-7. This is Probable cobalt-precorrin-6B C(15)-methyltransferase (decarboxylating) from Methanococcus maripaludis (strain DSM 14266 / JCM 13030 / NBRC 101832 / S2 / LL).